The chain runs to 117 residues: Flagellar transcriptional regulator FlhD (117 aa).

The protein belongs to the FlhD family. In terms of assembly, homodimer; disulfide-linked. Forms a heterohexamer composed of two FlhC and four FlhD subunits. Each FlhC binds a FlhD dimer, forming a heterotrimer, and a hexamer assembles by dimerization of two heterotrimers.

The protein localises to the cytoplasm. In terms of biological role, functions in complex with FlhC as a master transcriptional regulator that regulates transcription of several flagellar and non-flagellar operons by binding to their promoter region. Activates expression of class 2 flagellar genes, including fliA, which is a flagellum-specific sigma factor that turns on the class 3 genes. Also regulates genes whose products function in a variety of physiological pathways. The polypeptide is Flagellar transcriptional regulator FlhD (Erwinia amylovora (strain CFBP1430)).